A 30-amino-acid chain; its full sequence is Photosystem I reaction center subunit XII (30 aa).

Residues 7 to 26 traverse the membrane as a helical segment; that stretch reads IMVALFAALFTGILALRLGT.

It belongs to the PsaM family.

It localises to the plastid. The protein localises to the chloroplast thylakoid membrane. The protein is Photosystem I reaction center subunit XII of Mesostigma viride (Green alga).